We begin with the raw amino-acid sequence, 254 residues long: UPF0246 protein Fphi_1075 (254 aa).

It belongs to the UPF0246 family.

In Francisella philomiragia subsp. philomiragia (strain ATCC 25017 / CCUG 19701 / FSC 153 / O#319-036), this protein is UPF0246 protein Fphi_1075.